Here is a 417-residue protein sequence, read N- to C-terminus: Gamma-glutamyl phosphate reductase (417 aa).

The protein belongs to the gamma-glutamyl phosphate reductase family.

It is found in the cytoplasm. The catalysed reaction is L-glutamate 5-semialdehyde + phosphate + NADP(+) = L-glutamyl 5-phosphate + NADPH + H(+). The protein operates within amino-acid biosynthesis; L-proline biosynthesis; L-glutamate 5-semialdehyde from L-glutamate: step 2/2. In terms of biological role, catalyzes the NADPH-dependent reduction of L-glutamate 5-phosphate into L-glutamate 5-semialdehyde and phosphate. The product spontaneously undergoes cyclization to form 1-pyrroline-5-carboxylate. This is Gamma-glutamyl phosphate reductase from Klebsiella pneumoniae subsp. pneumoniae (strain ATCC 700721 / MGH 78578).